We begin with the raw amino-acid sequence, 427 residues long: GTPase Obg (427 aa).

Positions 1–158 (MFVDKVKVYV…RDVILELKVL (158 aa)) constitute an Obg domain. The interval 118–144 (KGGRGGRGNTRFATPANPAPELSENGE) is disordered. The 171-residue stretch at 159–329 (ADAGLVGFPS…LLRAIMDTIE (171 aa)) folds into the OBG-type G domain. Residues 165 to 172 (GFPSVGKS), 190 to 194 (FTTIT), 212 to 215 (DLPG), 282 to 285 (NKMD), and 310 to 312 (SAL) contribute to the GTP site. Positions 172 and 192 each coordinate Mg(2+). The OCT domain maps to 349 to 427 (KHDKEQDPFV…LLEFEFEFIE (79 aa)).

This sequence belongs to the TRAFAC class OBG-HflX-like GTPase superfamily. OBG GTPase family. Monomer. It depends on Mg(2+) as a cofactor.

It localises to the cytoplasm. In terms of biological role, an essential GTPase which binds GTP, GDP and possibly (p)ppGpp with moderate affinity, with high nucleotide exchange rates and a fairly low GTP hydrolysis rate. Plays a role in control of the cell cycle, stress response, ribosome biogenesis and in those bacteria that undergo differentiation, in morphogenesis control. In Halalkalibacterium halodurans (strain ATCC BAA-125 / DSM 18197 / FERM 7344 / JCM 9153 / C-125) (Bacillus halodurans), this protein is GTPase Obg.